Reading from the N-terminus, the 319-residue chain is Transaldolase (319 aa).

The Schiff-base intermediate with substrate role is filled by K125.

The protein belongs to the transaldolase family. Type 1 subfamily. In terms of assembly, homodimer.

Its subcellular location is the cytoplasm. The enzyme catalyses D-sedoheptulose 7-phosphate + D-glyceraldehyde 3-phosphate = D-erythrose 4-phosphate + beta-D-fructose 6-phosphate. The protein operates within carbohydrate degradation; pentose phosphate pathway; D-glyceraldehyde 3-phosphate and beta-D-fructose 6-phosphate from D-ribose 5-phosphate and D-xylulose 5-phosphate (non-oxidative stage): step 2/3. Transaldolase is important for the balance of metabolites in the pentose-phosphate pathway. The chain is Transaldolase from Ralstonia pickettii (strain 12J).